We begin with the raw amino-acid sequence, 156 residues long: MPRRREVPKREVLPDPKFGNVDVAKFMNMLMLSGKKSVAERIVYGAFEQIQTKGGKDPLEVFTVALNNVKPVVEVKSRRVGGANYQVPVEVRPSRRMALAMRWLREAAKKRSEKSMALRLAGELSEAAEGRGGAMKKRDEVHRMAEANRAFSHFRF.

The protein belongs to the universal ribosomal protein uS7 family. Part of the 30S ribosomal subunit. Contacts proteins S9 and S11.

In terms of biological role, one of the primary rRNA binding proteins, it binds directly to 16S rRNA where it nucleates assembly of the head domain of the 30S subunit. Is located at the subunit interface close to the decoding center, probably blocks exit of the E-site tRNA. In Burkholderia ambifaria (strain MC40-6), this protein is Small ribosomal subunit protein uS7.